We begin with the raw amino-acid sequence, 449 residues long: Chromosomal replication initiator protein DnaA (449 aa).

Residues 1 to 72 (MPNLEELWAY…VEGVYEFAQL (72 aa)) form a domain I, interacts with DnaA modulators region. Residues 72 to 109 (LEVDPVIMTKDELQPAPATDQRPAVEEDDQNLTFKAKT) are domain II. Positions 110 to 326 (HLNPKYTFDH…GALVRVQAFS (217 aa)) are domain III, AAA+ region. ATP contacts are provided by glycine 154, glycine 156, lysine 157, and threonine 158. A domain IV, binds dsDNA region spans residues 327-449 (TMKNEDITTS…ELRNILKNRG (123 aa)).

The protein belongs to the DnaA family. In terms of assembly, oligomerizes as a right-handed, spiral filament on DNA at oriC.

It is found in the cytoplasm. Its function is as follows. Plays an essential role in the initiation and regulation of chromosomal replication. ATP-DnaA binds to the origin of replication (oriC) to initiate formation of the DNA replication initiation complex once per cell cycle. Binds the DnaA box (a 9 base pair repeat at the origin) and separates the double-stranded (ds)DNA. Forms a right-handed helical filament on oriC DNA; dsDNA binds to the exterior of the filament while single-stranded (ss)DNA is stabiized in the filament's interior. The ATP-DnaA-oriC complex binds and stabilizes one strand of the AT-rich DNA unwinding element (DUE), permitting loading of DNA polymerase. After initiation quickly degrades to an ADP-DnaA complex that is not apt for DNA replication. Binds acidic phospholipids. The protein is Chromosomal replication initiator protein DnaA of Lacticaseibacillus paracasei (strain ATCC 334 / BCRC 17002 / CCUG 31169 / CIP 107868 / KCTC 3260 / NRRL B-441) (Lactobacillus paracasei).